The primary structure comprises 831 residues: MutS protein homolog 5 (831 aa).

The interval 1–43 is disordered; that stretch reads MAFRATPGRTPPGPGPGVPSASFSSPQPAMAAPGGIEEEDEEE. 589 to 596 contributes to the ATP binding site; that stretch reads GPNSSGKS.

The protein belongs to the DNA mismatch repair MutS family. As to quaternary structure, heterooligomer of MSH4 and MSH5. Interacts with HJURP. Interacts with C7h12orf40/REDIC1.

Involved in DNA mismatch repair and meiotic recombination processes. Facilitates crossovers between homologs during meiosis. This Rattus norvegicus (Rat) protein is MutS protein homolog 5 (Msh5).